The chain runs to 208 residues: Inducible T-cell costimulator (208 aa).

Positions 1 to 19 (MKSDLWYFLLFCFQVEALT) are cleaved as a signal peptide. The Extracellular segment spans residues 20–140 (GEINDSTKSE…YESQTCCQLK (121 aa)). N23 carries N-linked (GlcNAc...) asparagine glycosylation. The region spanning 30–132 (MFTFHDGGVQ…ISREYLNVYE (103 aa)) is the Ig-like V-type domain. 2 disulfide bridges follow: C42–C108 and C63–C82. N122 carries an N-linked (GlcNAc...) asparagine glycan. The helical transmembrane segment at 141–161 (FWLPIGCAAFVVVYIFGCIFL) threads the bilayer. The Cytoplasmic portion of the chain corresponds to 162–208 (CWLTKKKYRSSVHDPNSEYMFMAAVNTAKKPGLTGVTHNLELCGTQA).

Homodimer; disulfide-linked. Interacts with ICOSLG. Interacts with PIK3R1. Interacts with TBK1; this interaction is critical for the maturation of T follicular regulatory cells. N-glycosylated.

The protein localises to the cell membrane. Functionally, stimulatory receptor expressed in activated or antigen-experienced T-cells that plays an important role in the immune response. Upon binding to its ligand ICOSL expressed on antigen presenting cells (APCs), delivers costimulatory signals that enhances all basic T-cell responses to a foreign antigen, namely proliferation, secretion of lymphokines including IL10, up-regulation of molecules that mediate cell-cell interaction, and effective help for antibody secretion by B-cells. Also acts as a costimulatory receptor critical for the differentiation of T follicular regulatory cells upon immune challenges such as viral infection. Mechanistically, potentiates TCR-induced calcium flux by augmenting PLCG1 activation and actin remodeling. In addition, activates PI3K signaling pathways independently of calcium flux. Essential both for efficient interaction between T and B-cells and for normal antibody responses to T-cell dependent antigens. Prevents the apoptosis of pre-activated T-cells. Plays a critical role in CD40-mediated class switching of immunoglobin isotypes. In Canis lupus familiaris (Dog), this protein is Inducible T-cell costimulator (ICOS).